The following is a 120-amino-acid chain: U13-lycotoxin-Ls1e (120 aa).

The signal sequence occupies residues 1 to 16; that stretch reads MKILFVLISILYAVYC. Positions 17–54 are excised as a propeptide; the sequence is FSSEEDVDSAYLANELEPVEDINSEQYAALEPKEEQER. Disulfide bonds link Cys-56/Cys-70, Cys-63/Cys-76, Cys-69/Cys-87, and Cys-78/Cys-85. In terms of domain architecture, Agouti spans 56–95; it reads CAGMGRDCKDDCDCCLNIATCNCWFGRYFCSCTFGDYQTC.

The protein belongs to the neurotoxin 05 (agouti) family. Contains 6 disulfide bonds. In terms of tissue distribution, expressed by the venom gland.

The protein localises to the secreted. This is U13-lycotoxin-Ls1e from Lycosa singoriensis (Wolf spider).